The chain runs to 153 residues: 3-hydroxyacyl-[acyl-carrier-protein] dehydratase FabZ (153 aa).

Residue H54 is part of the active site.

Belongs to the thioester dehydratase family. FabZ subfamily.

The protein localises to the cytoplasm. It catalyses the reaction a (3R)-hydroxyacyl-[ACP] = a (2E)-enoyl-[ACP] + H2O. Functionally, involved in unsaturated fatty acids biosynthesis. Catalyzes the dehydration of short chain beta-hydroxyacyl-ACPs and long chain saturated and unsaturated beta-hydroxyacyl-ACPs. The chain is 3-hydroxyacyl-[acyl-carrier-protein] dehydratase FabZ from Shewanella pealeana (strain ATCC 700345 / ANG-SQ1).